Consider the following 542-residue polypeptide: uncharacterized protein (542 aa).

The next 5 membrane-spanning stretches (helical) occupy residues 4 to 23 (FVEN…LLLG), 28 to 47 (FGFR…FSTI), 51 to 70 (ITVP…YTIG), 91 to 113 (LALG…LGLA), and 160 to 182 (YSLT…GGLF). 2 consecutive RCK C-terminal domains span residues 190 to 272 (AKNA…LLGE) and 274 to 355 (VDGH…IFGD). A run of 5 helical transmembrane segments spans residues 363 to 385 (FNLV…EFPL), 390 to 412 (ALSL…MGRT), 425 to 447 (LALR…GAGF), 457 to 479 (LLII…VIGH), and 519 to 541 (YTSV…LFLL).

It belongs to the AAE transporter (TC 2.A.81) family.

The protein localises to the cell membrane. This is an uncharacterized protein from Corynebacterium efficiens (strain DSM 44549 / YS-314 / AJ 12310 / JCM 11189 / NBRC 100395).